The sequence spans 616 residues: MPKYRSATTTHGRNMAGARALWRATGMTDSDFGKPIITVVNSFTQFVPGHVHLRDLGKLVAEQIEASGGVAKEFNTIAVDDGIAMGHGGMLYSLPSRELIADSVEYMVNAHCADAMVCISNCDKITPGMLMASLRLNIPVIFVSGGPMEAGKTKLSDQIIKLDLVDAMIQGADPKVSDDQSNQVERSACPTCGSCSGMFTANSMNCLIEALGLSQPGNGSLLATHADRKQLFLNAGKRIVELTKRYYEQDDESALPRNIANKAAFENAMTLDIAMGGSTNTVLHLLAAAQEAEIDFTMSDIDKLSRKVPQLCKVAPSTQKYHMEDVHRAGGVLGILGELDRAGLLNRNVKNVLGLTLPQTLEQYDITVTQDEAVKKMFRAGPAGIRTTQAFSQDCRWDSLDDDRAAGCIRSLEYAYSKDGGLAVLYGNFAENGCIVKTAGVDDSILKFTGPVKVYESQDDAVEAILGGKVVEGDVVVIRYEGPKGGPGMQEMLYPTSFLKSMGLGKACALITDGRFSGGTSGLSIGHVSPEAASGGTIALIEDGDTIAIDIPNRSIQLQLSEAEIAARREAQEARGDKAWTPKNRQRQVSFALRAYASLATSADKGAVRDKSKLGG.

Position 81 (D81) interacts with Mg(2+). C122 provides a ligand contact to [2Fe-2S] cluster. Mg(2+) contacts are provided by D123 and K124. K124 carries the N6-carboxylysine modification. C195 serves as a coordination point for [2Fe-2S] cluster. Position 491 (E491) interacts with Mg(2+). Residue S517 is the Proton acceptor of the active site.

The protein belongs to the IlvD/Edd family. In terms of assembly, homodimer. Requires [2Fe-2S] cluster as cofactor. Mg(2+) serves as cofactor.

It carries out the reaction (2R)-2,3-dihydroxy-3-methylbutanoate = 3-methyl-2-oxobutanoate + H2O. It catalyses the reaction (2R,3R)-2,3-dihydroxy-3-methylpentanoate = (S)-3-methyl-2-oxopentanoate + H2O. It participates in amino-acid biosynthesis; L-isoleucine biosynthesis; L-isoleucine from 2-oxobutanoate: step 3/4. It functions in the pathway amino-acid biosynthesis; L-valine biosynthesis; L-valine from pyruvate: step 3/4. Functionally, functions in the biosynthesis of branched-chain amino acids. Catalyzes the dehydration of (2R,3R)-2,3-dihydroxy-3-methylpentanoate (2,3-dihydroxy-3-methylvalerate) into 2-oxo-3-methylpentanoate (2-oxo-3-methylvalerate) and of (2R)-2,3-dihydroxy-3-methylbutanoate (2,3-dihydroxyisovalerate) into 2-oxo-3-methylbutanoate (2-oxoisovalerate), the penultimate precursor to L-isoleucine and L-valine, respectively. This is Dihydroxy-acid dehydratase from Salmonella typhi.